A 244-amino-acid polypeptide reads, in one-letter code: Biosynthetic peptidoglycan transglycosylase (244 aa).

Residues 23-43 (LVVIGAWLAGILLFSFLPVPF) form a helical membrane-spanning segment.

This sequence belongs to the glycosyltransferase 51 family.

The protein localises to the cell inner membrane. It catalyses the reaction [GlcNAc-(1-&gt;4)-Mur2Ac(oyl-L-Ala-gamma-D-Glu-L-Lys-D-Ala-D-Ala)](n)-di-trans,octa-cis-undecaprenyl diphosphate + beta-D-GlcNAc-(1-&gt;4)-Mur2Ac(oyl-L-Ala-gamma-D-Glu-L-Lys-D-Ala-D-Ala)-di-trans,octa-cis-undecaprenyl diphosphate = [GlcNAc-(1-&gt;4)-Mur2Ac(oyl-L-Ala-gamma-D-Glu-L-Lys-D-Ala-D-Ala)](n+1)-di-trans,octa-cis-undecaprenyl diphosphate + di-trans,octa-cis-undecaprenyl diphosphate + H(+). The protein operates within cell wall biogenesis; peptidoglycan biosynthesis. Peptidoglycan polymerase that catalyzes glycan chain elongation from lipid-linked precursors. The protein is Biosynthetic peptidoglycan transglycosylase of Pectobacterium carotovorum subsp. carotovorum (strain PC1).